The primary structure comprises 584 residues: POTE ankyrin domain family member D (584 aa).

ANK repeat units follow at residues 172–201 (EKRT…QLNV), 205–234 (KKRT…DRNI), 238–267 (YGNT…DIES), 271–300 (CGLT…NLNV), 304–333 (YGRT…DVSS), and 337–366 (SGQT…KQML). The interval 369–502 (SSENSNPEQD…ILTNKQKQIE (134 aa)) is disordered. Composition is skewed to basic and acidic residues over residues 377 to 392 (QDLK…RLKV), 401 to 412 (MSQEPEINKDCD), and 466 to 481 (EEYH…KQLS). A compositionally biased stretch (polar residues) spans 482–498 (EEQNTGISQDEILTNKQ). A coiled-coil region spans residues 494–583 (LTNKQKQIEV…LNEEALTKTN (90 aa)).

It belongs to the POTE family. As to expression, expressed in prostate, ovary, testis, placenta and prostate cancer cell lines. Localizes to basal and terminal prostate epithelial cells.

The protein localises to the cell membrane. The sequence is that of POTE ankyrin domain family member D (POTED) from Homo sapiens (Human).